Reading from the N-terminus, the 2156-residue chain is Probable capsid protein 3 (2156 aa).

Residues 1319-1345 are disordered; it reads NKSNKSNKSNESDKSSESDKSSESSNH. Residues 1326–1345 are compositionally biased toward basic and acidic residues; it reads KSNESDKSSESDKSSESSNH.

The protein belongs to the NCLDV major capsid protein family.

Its subcellular location is the virion. The chain is Probable capsid protein 3 from Acanthamoeba polyphaga mimivirus (APMV).